Consider the following 150-residue polypeptide: D-aminoacyl-tRNA deacylase (150 aa).

The short motif at 136-137 (GP) is the Gly-cisPro motif, important for rejection of L-amino acids element.

This sequence belongs to the DTD family. Homodimer.

It is found in the cytoplasm. It catalyses the reaction glycyl-tRNA(Ala) + H2O = tRNA(Ala) + glycine + H(+). The catalysed reaction is a D-aminoacyl-tRNA + H2O = a tRNA + a D-alpha-amino acid + H(+). Functionally, an aminoacyl-tRNA editing enzyme that deacylates mischarged D-aminoacyl-tRNAs. Also deacylates mischarged glycyl-tRNA(Ala), protecting cells against glycine mischarging by AlaRS. Acts via tRNA-based rather than protein-based catalysis; rejects L-amino acids rather than detecting D-amino acids in the active site. By recycling D-aminoacyl-tRNA to D-amino acids and free tRNA molecules, this enzyme counteracts the toxicity associated with the formation of D-aminoacyl-tRNA entities in vivo and helps enforce protein L-homochirality. The sequence is that of D-aminoacyl-tRNA deacylase from Staphylococcus aureus (strain MRSA252).